The primary structure comprises 84 residues: Delta-conotoxin-like Bt6.4 (84 aa).

Residues 1-22 (MKLTCMVIVAVLFLTAWTSVMA) form the signal peptide. Positions 23-57 (DGSINRPDIAEGWQKFFSKARDEMKNRAASELNKR) are excised as a propeptide. Cystine bridges form between C58–C74, C65–C78, and C73–C82.

This sequence belongs to the conotoxin O1 superfamily. As to expression, expressed by the venom duct.

The protein localises to the secreted. This toxin activates voltage-gated sodium channels. It shifts the voltage-dependence of activation to more hyperpolarized potentials but has only little effect on channel inactivation. It is active on Nav1.3/SCN3A (EC(50)=3.98 nM), Nav1.4/SCN4A (EC(50)=4.99 nM), Nav1.6/SCN8A (EC(50)=1.27 nM) and Nav1.7/SCN9A (EC(50)=2.42 nM) voltage-gated sodium channels. In vivo, it induces nocifensive or pain-like behaviors in mice when injected intraplantarly. The chain is Delta-conotoxin-like Bt6.4 from Conus betulinus (Beech cone).